Reading from the N-terminus, the 426-residue chain is MATEFTVPDSAARIATAQQAGGGTPVRSGPPDEGGEFSGDRMSLSMGPSHPSTHGVLRIQMELEGEILTKADPIIGYLHRGDEKIAENMTYNQFVPYTDRLDYLAPLANNMAYVIAVEKLAGLTVPPRCQAIRVITAELARISSHLMGLGAFGLDVGAWTVLVLSLNQREFLYNLFEDLTGARFTTSYTRIGGVTRDVPPGWLENVGTFCDKFLPALEEILSLLTRNKIFLDRTVGVGVISKEDAIAYGITGPNARGSGIATDLRKDRPYSGYEQYEFDVPVGTKGDCYDRYLVRGEEMRQSVRIIRQVIKNFPGGDWYATEAKKVFLPPKGKVLSSMEELIQQFMLVTEGPQMPAGEVYFEAENPKGILGFYIVSKGGGVPYRLKIRSPSFCNLSLVPKLCQGVLISDVVAILGSLDFVMGECDR.

The segment at 1–51 is disordered; it reads MATEFTVPDSAARIATAQQAGGGTPVRSGPPDEGGEFSGDRMSLSMGPSHP.

The protein belongs to the complex I 49 kDa subunit family. In terms of assembly, NDH-1 is composed of 14 different subunits. Subunits NuoB, C, D, E, F, and G constitute the peripheral sector of the complex.

The protein localises to the cell inner membrane. It carries out the reaction a quinone + NADH + 5 H(+)(in) = a quinol + NAD(+) + 4 H(+)(out). Its function is as follows. NDH-1 shuttles electrons from NADH, via FMN and iron-sulfur (Fe-S) centers, to quinones in the respiratory chain. The immediate electron acceptor for the enzyme in this species is believed to be ubiquinone. Couples the redox reaction to proton translocation (for every two electrons transferred, four hydrogen ions are translocated across the cytoplasmic membrane), and thus conserves the redox energy in a proton gradient. The sequence is that of NADH-quinone oxidoreductase subunit D 1 from Opitutus terrae (strain DSM 11246 / JCM 15787 / PB90-1).